The sequence spans 290 residues: 33 kDa chaperonin (290 aa).

2 disulfides stabilise this stretch: cysteine 231–cysteine 233 and cysteine 263–cysteine 266.

This sequence belongs to the HSP33 family. Under oxidizing conditions two disulfide bonds are formed involving the reactive cysteines. Under reducing conditions zinc is bound to the reactive cysteines and the protein is inactive.

It localises to the cytoplasm. Redox regulated molecular chaperone. Protects both thermally unfolding and oxidatively damaged proteins from irreversible aggregation. Plays an important role in the bacterial defense system toward oxidative stress. The protein is 33 kDa chaperonin of Thermotoga maritima (strain ATCC 43589 / DSM 3109 / JCM 10099 / NBRC 100826 / MSB8).